The primary structure comprises 361 residues: Mannose-1-phosphate guanyltransferase (361 aa).

Threonine 153 is modified (phosphothreonine). A Glycyl lysine isopeptide (Lys-Gly) (interchain with G-Cter in ubiquitin) cross-link involves residue lysine 244.

The protein belongs to the transferase hexapeptide repeat family.

It is found in the cytoplasm. The enzyme catalyses alpha-D-mannose 1-phosphate + GTP + H(+) = GDP-alpha-D-mannose + diphosphate. It participates in nucleotide-sugar biosynthesis; GDP-alpha-D-mannose biosynthesis; GDP-alpha-D-mannose from alpha-D-mannose 1-phosphate (GTP route): step 1/1. Functionally, involved in cell wall synthesis where it is required for glycosylation. Involved in cell cycle progression through cell-size checkpoint. The sequence is that of Mannose-1-phosphate guanyltransferase (PSA1) from Saccharomyces cerevisiae (strain ATCC 204508 / S288c) (Baker's yeast).